The following is a 288-amino-acid chain: Acetyl-coenzyme A carboxylase carboxyl transferase subunit beta (288 aa).

The region spanning leucine 34 to glutamine 288 is the CoA carboxyltransferase N-terminal domain. Zn(2+)-binding residues include cysteine 38, cysteine 41, cysteine 56, and cysteine 59. The C4-type zinc finger occupies cysteine 38 to cysteine 59.

This sequence belongs to the AccD/PCCB family. In terms of assembly, acetyl-CoA carboxylase is a heterohexamer composed of biotin carboxyl carrier protein (AccB), biotin carboxylase (AccC) and two subunits each of ACCase subunit alpha (AccA) and ACCase subunit beta (AccD). It depends on Zn(2+) as a cofactor.

The protein resides in the cytoplasm. The catalysed reaction is N(6)-carboxybiotinyl-L-lysyl-[protein] + acetyl-CoA = N(6)-biotinyl-L-lysyl-[protein] + malonyl-CoA. It participates in lipid metabolism; malonyl-CoA biosynthesis; malonyl-CoA from acetyl-CoA: step 1/1. Functionally, component of the acetyl coenzyme A carboxylase (ACC) complex. Biotin carboxylase (BC) catalyzes the carboxylation of biotin on its carrier protein (BCCP) and then the CO(2) group is transferred by the transcarboxylase to acetyl-CoA to form malonyl-CoA. The polypeptide is Acetyl-coenzyme A carboxylase carboxyl transferase subunit beta (Streptococcus dysgalactiae subsp. equisimilis (strain GGS_124)).